The primary structure comprises 1316 residues: DNA-directed RNA polymerase subunit beta' (1316 aa).

Residues cysteine 60, cysteine 62, cysteine 75, and cysteine 78 each contribute to the Zn(2+) site. Positions 183-209 (ELEEEGAKSDVRRKVRDGGEREMRQLR) are disordered. Positions 535, 537, and 539 each coordinate Mg(2+). Zn(2+)-binding residues include cysteine 890, cysteine 966, cysteine 973, and cysteine 976.

The protein belongs to the RNA polymerase beta' chain family. As to quaternary structure, the RNAP catalytic core consists of 2 alpha, 1 beta, 1 beta' and 1 omega subunit. When a sigma factor is associated with the core the holoenzyme is formed, which can initiate transcription. The cofactor is Mg(2+). It depends on Zn(2+) as a cofactor.

The enzyme catalyses RNA(n) + a ribonucleoside 5'-triphosphate = RNA(n+1) + diphosphate. In terms of biological role, DNA-dependent RNA polymerase catalyzes the transcription of DNA into RNA using the four ribonucleoside triphosphates as substrates. This Mycolicibacterium gilvum (strain PYR-GCK) (Mycobacterium gilvum (strain PYR-GCK)) protein is DNA-directed RNA polymerase subunit beta'.